Reading from the N-terminus, the 512-residue chain is GMP synthase [glutamine-hydrolyzing] (512 aa).

Residues 7 to 197 enclose the Glutamine amidotransferase type-1 domain; that stretch reads TIIVLDFGSQ…VFGVCGCSEG (191 aa). The Nucleophile role is filled by cysteine 84. Residues histidine 171 and glutamate 173 contribute to the active site. The 190-residue stretch at 198–387 folds into the GMPS ATP-PPase domain; the sequence is WNMENFIEVE…LGIPDEIVWR (190 aa). Position 225 to 231 (225 to 231) interacts with ATP; sequence SGGVDSS.

In terms of assembly, homodimer.

The catalysed reaction is XMP + L-glutamine + ATP + H2O = GMP + L-glutamate + AMP + diphosphate + 2 H(+). Its pathway is purine metabolism; GMP biosynthesis; GMP from XMP (L-Gln route): step 1/1. Its function is as follows. Catalyzes the synthesis of GMP from XMP. In Bacillus cytotoxicus (strain DSM 22905 / CIP 110041 / 391-98 / NVH 391-98), this protein is GMP synthase [glutamine-hydrolyzing].